Here is a 426-residue protein sequence, read N- to C-terminus: Histidine--tRNA ligase (426 aa).

Belongs to the class-II aminoacyl-tRNA synthetase family. Homodimer.

It is found in the cytoplasm. It catalyses the reaction tRNA(His) + L-histidine + ATP = L-histidyl-tRNA(His) + AMP + diphosphate + H(+). This is Histidine--tRNA ligase from Legionella pneumophila subsp. pneumophila (strain Philadelphia 1 / ATCC 33152 / DSM 7513).